A 368-amino-acid polypeptide reads, in one-letter code: Proton-coupled zinc antiporter SLC30A8 (368 aa).

The Cytoplasmic segment spans residues 1-78 (MEFLERTYLV…AKWRLCAASA (78 aa)). The Zn(2+) site is built by histidine 51, cysteine 52, and histidine 53. Residues 51 to 53 (HCH) carry the HCH Motif; seals regulatory zinc-binding pocket motif. Residues 79-99 (ICFFFMVAEVVGGHVAGSLAV) traverse the membrane as a helical segment. The Lumenal, vesicle segment spans residues 100 to 102 (LTD). Residues 103–123 (AAHLLIDLTSFLLSLFSLWLS) traverse the membrane as a helical segment. Zn(2+) is bound by residues histidine 105 and aspartate 109. Over 124-139 (SRPPSKRLTFGWYRAE) the chain is Cytoplasmic. A helical membrane pass occupies residues 140 to 160 (ILGALLSVLCIWVVTGVLVYL). The Lumenal, vesicle portion of the chain corresponds to 161 to 174 (ACERLLYPDYQIQA). Residues 175 to 195 (GIMITVSGCAVAANIVLTLIL) traverse the membrane as a helical segment. Residues 196–216 (HQRHLGHNHKDAQANASVRAA) are Cytoplasmic-facing. A helical transmembrane segment spans residues 217–237 (FVHALGDVFQSTSVLISALII). Residues histidine 219 and aspartate 223 each coordinate Zn(2+). The Lumenal, vesicle segment spans residues 238 to 245 (YFKPDYKM). A helical membrane pass occupies residues 246–266 (ADPVCTFISSVLALASTVMIL). Residues 267–368 (KDFSILLMEG…SCLLCEDPQD (102 aa)) lie on the Cytoplasmic side of the membrane. Residues histidine 300, histidine 317, histidine 344, glutamate 351, cysteine 360, and cysteine 363 each coordinate Zn(2+).

This sequence belongs to the cation diffusion facilitator (CDF) transporter (TC 2.A.4) family. SLC30A subfamily. In terms of assembly, homodimer. As to expression, expressed in endocrine pancreatic islet alpha and beta cells. May be more abundant in beta cells than in alpha cells. Expressed in cubical epithelium lining thyroid follicles (at protein level). In the adrenal gland, detected in the cortex, but not in the medulla (at protein level).

The protein resides in the cytoplasmic vesicle. It is found in the secretory vesicle membrane. Its subcellular location is the cell membrane. It carries out the reaction Zn(2+)(in) + 2 H(+)(out) = Zn(2+)(out) + 2 H(+)(in). Proton-coupled zinc ion antiporter mediating the entry of zinc into the lumen of pancreatic beta cell secretory granules, thereby regulating insulin secretion. The polypeptide is Proton-coupled zinc antiporter SLC30A8 (Rattus norvegicus (Rat)).